The following is a 93-amino-acid chain: Early E3A 10.5 kDa glycoprotein (93 aa).

A glycan (N-linked (GlcNAc...) asparagine; by host) is linked at Asn3. A helical transmembrane segment spans residues 34-55 (MWWFSIALMFVCLIIMWLICCL).

It belongs to the adenoviridae E3A-1 family. In terms of processing, N-glycosylated and probably also O-glycosylated.

The protein resides in the host nucleus membrane. The polypeptide is Early E3A 10.5 kDa glycoprotein (Homo sapiens (Human)).